A 547-amino-acid polypeptide reads, in one-letter code: Threonylcarbamoyladenosine tRNA methylthiotransferase (547 aa).

The interval 30-51 (ARKSVVPRARKHKQETGEQMQT) is disordered. In terms of domain architecture, MTTase N-terminal spans 59–167 (QKVWLKTWGC…VVEVVDEAIK (109 aa)). 6 residues coordinate [4Fe-4S] cluster: Cys-68, Cys-104, Cys-133, Cys-209, Cys-213, and Cys-216. Residues 195–426 (RKNPLIEIIS…ALFHSYRPYD (232 aa)) form the Radical SAM core domain. The TRAM domain occupies 426 to 488 (DHKMGEQQQV…KHYMKGRPLE (63 aa)). Residues 527 to 547 (ILAVVLLLSAVLLALLMEKLL) traverse the membrane as a helical segment.

Belongs to the methylthiotransferase family. CDKAL1 subfamily. Requires [4Fe-4S] cluster as cofactor.

It is found in the endoplasmic reticulum membrane. It carries out the reaction N(6)-L-threonylcarbamoyladenosine(37) in tRNA + (sulfur carrier)-SH + AH2 + 2 S-adenosyl-L-methionine = 2-methylsulfanyl-N(6)-L-threonylcarbamoyladenosine(37) in tRNA + (sulfur carrier)-H + 5'-deoxyadenosine + L-methionine + A + S-adenosyl-L-homocysteine + 2 H(+). Its function is as follows. Catalyzes the methylthiolation of N6-threonylcarbamoyladenosine (t(6)A), leading to the formation of 2-methylthio-N6-threonylcarbamoyladenosine (ms(2)t(6)A) at position 37 in tRNAs that read codons beginning with adenine. The sequence is that of Threonylcarbamoyladenosine tRNA methylthiotransferase (cdkal1) from Danio rerio (Zebrafish).